The chain runs to 301 residues: Glycine--tRNA ligase alpha subunit (301 aa).

Belongs to the class-II aminoacyl-tRNA synthetase family. As to quaternary structure, tetramer of two alpha and two beta subunits.

It localises to the cytoplasm. It catalyses the reaction tRNA(Gly) + glycine + ATP = glycyl-tRNA(Gly) + AMP + diphosphate. This Campylobacter hominis (strain ATCC BAA-381 / DSM 21671 / CCUG 45161 / LMG 19568 / NCTC 13146 / CH001A) protein is Glycine--tRNA ligase alpha subunit.